The sequence spans 381 residues: E3 ubiquitin-protein ligase RNF133 (381 aa).

The region spanning 65-167 is the PA domain; that stretch reads SSILKRVAGV…VKGMEILHLI (103 aa). Residues 186 to 208 traverse the membrane as a helical segment; the sequence is WLNHYFVSFMIVTTATLAYFTFY. Residues 256-297 form an RING-type; atypical zinc finger; sequence CVICFEAYKPNEIVRILTCKHFFHKNCIDPWILAHGTCPMCK. A disordered region spans residues 340-381; the sequence is LPPARTSSKVTHVQEHPTSVNVGSQPPEAEETGHPSFGQHDL. Positions 344–363 are enriched in polar residues; the sequence is RTSSKVTHVQEHPTSVNVGS.

As to quaternary structure, interacts with E3 ligase UBE2J1. In terms of processing, auto-ubiquitinated.

The protein localises to the endoplasmic reticulum membrane. It carries out the reaction S-ubiquitinyl-[E2 ubiquitin-conjugating enzyme]-L-cysteine + [acceptor protein]-L-lysine = [E2 ubiquitin-conjugating enzyme]-L-cysteine + N(6)-ubiquitinyl-[acceptor protein]-L-lysine.. It functions in the pathway protein modification; protein ubiquitination. Its function is as follows. Has E3 ubiquitin-protein ligase activity. Plays a role in male fecundity through the interaction with the E2 ubituitin-protein ligase UBE2J1. This Rattus norvegicus (Rat) protein is E3 ubiquitin-protein ligase RNF133 (Rnf133).